The following is a 198-amino-acid chain: MENGMYKKKGVCDSCVSSKSRSNHSPKRSMMEPQPHHLLMDWNKANDLLTQEHAAFLNDPHHLMLDPPPETLIHLDEDEEYDEDMDAMKEMQYMIAVMQPVDIDPATVPKPNRRNVRISDDPQTVVARRRRERISEKIRILKRIVPGGAKMDTASMLDEAIRYTKFLKRQVRILQPHSQIGAPMANPSYLCYYHNSQP.

The tract at residues M1–P33 is disordered. Residues I118–L167 form the bHLH domain.

Homodimer. Heterodimer; possibly with ALC. As to expression, after fertilization, it is expressed in stripes about four cells wide at the margins of developing wild-type fruit. Also expressed in the inner valve layer, which becomes lignified later in fruit development. Detected in roots.

The protein resides in the nucleus. In terms of biological role, transcription regulator required for seed dispersal. Involved in the differentiation of all three cell types required for fruit dehiscence. Acts as the key regulator in a network including SHP and ALC that controls specification of the valve margin. Works with ALC, SHP, and FUL to allow differentiation of the lignified valve layer, the spring-loaded mechanism of fruit that promotes opening. Regulates the expression of the YJ80 marker. This is Transcription factor IND (IND) from Arabidopsis thaliana (Mouse-ear cress).